The chain runs to 134 residues: Isocitrate dehydrogenase [NAD] subunit alpha, mitochondrial (134 aa).

At lysine 37 the chain carries N6-succinyllysine. Threonine 50 carries the post-translational modification Phosphothreonine. 3 residues coordinate substrate: arginine 64, arginine 74, and arginine 95.

Belongs to the isocitrate and isopropylmalate dehydrogenases family. Heterooligomer of subunits alpha (IDH3A), beta (IDH3B), and gamma (IDH3G) in the apparent ratio of 2:1:1. The heterodimer containing one IDH3A and one IDH3B subunit and the heterodimer containing one IDH3A and one IDH3G subunit assemble into a heterotetramer (which contains two subunits of IDH3A, one of IDH3B and one of IDH3G) and further into the heterooctamer. Mg(2+) serves as cofactor. It depends on Mn(2+) as a cofactor.

The protein resides in the mitochondrion. The enzyme catalyses D-threo-isocitrate + NAD(+) = 2-oxoglutarate + CO2 + NADH. The heterotetramer and the heterodimer composed of IDH3A and IDH3G subunits can be allosterically activated by citrate (CIT) or/and ADP, and the two activators can act independently or synergistically. The heterodimer composed of IDH3A and IDH3B subunits cannot be allosterically regulated and the allosteric regulation of the heterotetramer is through the IDH3G subunit and not the IDH3B subunit. The IDH3G subunit contains the allosteric site which consists of a CIT-binding site and an ADP-binding site, and the binding of CIT and ADP causes conformational changes at the allosteric site which are transmitted to the active site in the catalytic subunit (IDH3A) through a cascade of conformational changes at the heterodimer interface, leading to stabilization of the isocitrate-binding at the active site and thus activation of the enzyme. ATP can activate the heterotetramer and the heterodimer composed of IDH3A and IDH3G subunits at low concentrations but inhibits their activities at high concentrations, whereas ATP exhibits only inhibitory effect on the heterodimer composed of IDH3A and IDH3B subunits. Its function is as follows. Catalytic subunit of the enzyme which catalyzes the decarboxylation of isocitrate (ICT) into alpha-ketoglutarate. The heterodimer composed of the alpha (IDH3A) and beta (IDH3B) subunits and the heterodimer composed of the alpha (IDH3A) and gamma (IDH3G) subunits, have considerable basal activity but the full activity of the heterotetramer (containing two subunits of IDH3A, one of IDH3B and one of IDH3G) requires the assembly and cooperative function of both heterodimers. The protein is Isocitrate dehydrogenase [NAD] subunit alpha, mitochondrial of Mesocricetus auratus (Golden hamster).